The sequence spans 434 residues: Sulfide-quinone reductase (434 aa).

FAD is bound by residues 8–12 (GAGTG), 34–35 (SA), and 77–78 (SA). Cys160 serves as the catalytic Cysteine persulfide intermediate. Residues Ile302 and Gly322 each coordinate FAD. Catalysis depends on Cys356, which acts as the Cysteine persulfide intermediate. Lys391 is an FAD binding site.

This sequence belongs to the SQRD family. In terms of assembly, homodimer. Requires FAD as cofactor.

The protein resides in the membrane. The enzyme catalyses n a quinone + n hydrogen sulfide + n H(+) = polysulfur(n-2) + n a quinol. Catalyzes the oxidation of hydrogen sulfide, with the help of a quinone. Consecutive reaction cycles lead to the accumulation of a polysulfide product on the active site Cys residues; these products are released when they exceed a critical length, typically as cyclooctasulfur. The protein is Sulfide-quinone reductase of Acidithiobacillus ferrooxidans (strain ATCC 23270 / DSM 14882 / CIP 104768 / NCIMB 8455) (Ferrobacillus ferrooxidans (strain ATCC 23270)).